The following is a 671-amino-acid chain: DNA ligase (671 aa).

NAD(+)-binding positions include 31-35 (DAEYD), 80-81 (SL), and Glu-110. Lys-112 (N6-AMP-lysine intermediate) is an active-site residue. Positions 133, 167, 283, and 307 each coordinate NAD(+). Residues Cys-401, Cys-404, Cys-419, and Cys-424 each contribute to the Zn(2+) site. Residues 587-671 (EEELVFAGKT…YLPDEGGLNE (85 aa)) form the BRCT domain.

This sequence belongs to the NAD-dependent DNA ligase family. LigA subfamily. Mg(2+) serves as cofactor. It depends on Mn(2+) as a cofactor.

The catalysed reaction is NAD(+) + (deoxyribonucleotide)n-3'-hydroxyl + 5'-phospho-(deoxyribonucleotide)m = (deoxyribonucleotide)n+m + AMP + beta-nicotinamide D-nucleotide.. DNA ligase that catalyzes the formation of phosphodiester linkages between 5'-phosphoryl and 3'-hydroxyl groups in double-stranded DNA using NAD as a coenzyme and as the energy source for the reaction. It is essential for DNA replication and repair of damaged DNA. The protein is DNA ligase of Listeria innocua serovar 6a (strain ATCC BAA-680 / CLIP 11262).